A 281-amino-acid polypeptide reads, in one-letter code: Large ribosomal subunit protein uL2 (281 aa).

Disordered stretches follow at residues M1–K23 and R224–K281. Polar residues predominate over residues G12–K23. Over residues K261–K281 the composition is skewed to basic residues.

This sequence belongs to the universal ribosomal protein uL2 family. As to quaternary structure, part of the 50S ribosomal subunit. Forms a bridge to the 30S subunit in the 70S ribosome.

In terms of biological role, one of the primary rRNA binding proteins. Required for association of the 30S and 50S subunits to form the 70S ribosome, for tRNA binding and peptide bond formation. It has been suggested to have peptidyltransferase activity; this is somewhat controversial. Makes several contacts with the 16S rRNA in the 70S ribosome. The sequence is that of Large ribosomal subunit protein uL2 from Mycoplasmopsis agalactiae (strain NCTC 10123 / CIP 59.7 / PG2) (Mycoplasma agalactiae).